We begin with the raw amino-acid sequence, 630 residues long: Succinate dehydrogenase [ubiquinone] flavoprotein subunit, mitochondrial (630 aa).

The N-terminal 31 residues, 1 to 31 (MWRGCVSRGLRSLSKGKGSSSSAPVSAAARL), are a transit peptide targeting the mitochondrion. Residues 52 to 57 (GAGGAG), 75 to 90 (TKLF…AQGG), and D260 each bind FAD. Tele-8alpha-FAD histidine is present on H83. Substrate-binding residues include H281 and T293. R325 (proton acceptor) is an active-site residue. Residue H392 coordinates substrate. FAD is bound at residue E426. A substrate-binding site is contributed by R437. 442-443 (SL) lines the FAD pocket.

This sequence belongs to the FAD-dependent oxidoreductase 2 family. FRD/SDH subfamily. Component of complex II composed of eight subunits in plants: four classical SDH subunits SDH1, SDH2, SDH3 and SDH4 (a flavoprotein (FP), an iron-sulfur protein (IP), and a cytochrome b composed of a large and a small subunit.), as well as four subunits unknown in mitochondria from bacteria and heterotrophic eukaryotes. Requires FAD as cofactor.

The protein resides in the mitochondrion inner membrane. The enzyme catalyses a quinone + succinate = fumarate + a quinol. It participates in carbohydrate metabolism; tricarboxylic acid cycle; fumarate from succinate (eukaryal route): step 1/1. Flavoprotein (FP) subunit of succinate dehydrogenase (SDH) that is involved in complex II of the mitochondrial electron transport chain and is responsible for transferring electrons from succinate to ubiquinone (coenzyme Q). This is Succinate dehydrogenase [ubiquinone] flavoprotein subunit, mitochondrial (SDH1) from Oryza sativa subsp. japonica (Rice).